The sequence spans 238 residues: Probable 2-phosphosulfolactate phosphatase (238 aa).

It belongs to the ComB family. Mg(2+) serves as cofactor.

It carries out the reaction (2R)-O-phospho-3-sulfolactate + H2O = (2R)-3-sulfolactate + phosphate. In Clostridium beijerinckii (strain ATCC 51743 / NCIMB 8052) (Clostridium acetobutylicum), this protein is Probable 2-phosphosulfolactate phosphatase.